The primary structure comprises 215 residues: Adenylate kinase (215 aa).

10–15 (GAGKGT) lines the ATP pocket. The segment at 30–59 (STGDMFRKAIKEETELGKEAKSYMDRGELV) is NMP. AMP is bound by residues T31, R36, 57-59 (ELV), 85-88 (GFPR), and Q92. Residues 126 to 163 (GRRICESCGTTYHLVFNPPKVEGICDIDGGKLYQREDD) form an LID region. An ATP-binding site is contributed by R127. C130 and C133 together coordinate Zn(2+). 136–137 (TY) provides a ligand contact to ATP. Zn(2+) contacts are provided by C150 and D153. R160 and R171 together coordinate AMP. K199 serves as a coordination point for ATP.

The protein belongs to the adenylate kinase family. In terms of assembly, monomer.

Its subcellular location is the cytoplasm. The enzyme catalyses AMP + ATP = 2 ADP. It functions in the pathway purine metabolism; AMP biosynthesis via salvage pathway; AMP from ADP: step 1/1. In terms of biological role, catalyzes the reversible transfer of the terminal phosphate group between ATP and AMP. Plays an important role in cellular energy homeostasis and in adenine nucleotide metabolism. The sequence is that of Adenylate kinase from Staphylococcus aureus (strain COL).